We begin with the raw amino-acid sequence, 190 residues long: dCTP deaminase (190 aa).

Residues 113-118 (KSTYAR), 137-139 (TLE), glutamine 158, tyrosine 172, and glutamine 182 contribute to the dCTP site. Glutamate 139 serves as the catalytic Proton donor/acceptor.

Belongs to the dCTP deaminase family. In terms of assembly, homotrimer.

The enzyme catalyses dCTP + H2O + H(+) = dUTP + NH4(+). Its pathway is pyrimidine metabolism; dUMP biosynthesis; dUMP from dCTP (dUTP route): step 1/2. Functionally, catalyzes the deamination of dCTP to dUTP. The polypeptide is dCTP deaminase (Chromobacterium violaceum (strain ATCC 12472 / DSM 30191 / JCM 1249 / CCUG 213 / NBRC 12614 / NCIMB 9131 / NCTC 9757 / MK)).